The sequence spans 285 residues: Putative hydrolase DDAH2 (285 aa).

His-171 serves as the catalytic Proton donor. Cys-276 functions as the Nucleophile in the catalytic mechanism.

It belongs to the DDAH family. Phosphorylated by TBK1. Phosphorylation inhibits the translocation into the mitochondrion upon Sendai viral infection. As to expression, detected in heart, placenta, lung, liver, skeletal muscle, kidney and pancreas, and at very low levels in brain.

Its subcellular location is the cytoplasm. It localises to the mitochondrion. Putative hydrolase with unknown substrate. Does not hydrolyze N(G),N(G)-dimethyl-L-arginine (ADMA) which acts as an inhibitor of NOS. In endothelial cells, induces expression of vascular endothelial growth factor (VEGF) via phosphorylation of the transcription factor SP1 by PKA in a process that is independent of NO and NO synthase. Similarly, enhances pancreatic insulin secretion through SP1-mediated transcriptional up-regulation of secretagogin/SCGN, an insulin vesicle docking protein. Upon viral infection, relocates to mitochondria where it promotes mitochondrial fission through activation of DNM1L leading to the inhibition of innate response activation mediated by MAVS. This chain is Putative hydrolase DDAH2, found in Homo sapiens (Human).